A 468-amino-acid polypeptide reads, in one-letter code: Adenylyltransferase and sulfurtransferase MOCS3-1 (468 aa).

ATP is bound by residues Gly-111, Asp-132, 139–143, Lys-156, and 200–201; these read NNLHR and DN. Cys-241 and Cys-244 together coordinate Zn(2+). Cys-258 serves as the catalytic Glycyl thioester intermediate; for adenylyltransferase activity. Residues Cys-316 and Cys-319 each coordinate Zn(2+). Residues 371–466 form the Rhodanese domain; the sequence is DGEPHLLLDV…WGRDVDPDFP (96 aa). The active-site Cysteine persulfide intermediate; for sulfurtransferase activity is Cys-426.

The protein in the N-terminal section; belongs to the HesA/MoeB/ThiF family. UBA4 subfamily. It depends on Zn(2+) as a cofactor.

It is found in the cytoplasm. It carries out the reaction [molybdopterin-synthase sulfur-carrier protein]-C-terminal Gly-Gly + ATP + H(+) = [molybdopterin-synthase sulfur-carrier protein]-C-terminal Gly-Gly-AMP + diphosphate. The enzyme catalyses [molybdopterin-synthase sulfur-carrier protein]-C-terminal Gly-Gly-AMP + S-sulfanyl-L-cysteinyl-[cysteine desulfurase] + AH2 = [molybdopterin-synthase sulfur-carrier protein]-C-terminal-Gly-aminoethanethioate + L-cysteinyl-[cysteine desulfurase] + A + AMP + 2 H(+). It functions in the pathway tRNA modification; 5-methoxycarbonylmethyl-2-thiouridine-tRNA biosynthesis. The protein operates within cofactor biosynthesis; molybdopterin biosynthesis. Its function is as follows. Plays a central role in 2-thiolation of mcm(5)S(2)U at tRNA wobble positions of cytosolic tRNA(Lys), tRNA(Glu) and tRNA(Gln). Also essential during biosynthesis of the molybdenum cofactor. Acts by mediating the C-terminal thiocarboxylation of sulfur carriers URM1 and MOCS2A. Its N-terminus first activates URM1 and MOCS2A as acyl-adenylates (-COAMP), then the persulfide sulfur on the catalytic cysteine is transferred to URM1 and MOCS2A to form thiocarboxylation (-COSH) of their C-terminus. The reaction probably involves hydrogen sulfide that is generated from the persulfide intermediate and that acts as a nucleophile towards URM1 and MOCS2A. Subsequently, a transient disulfide bond is formed. Does not use thiosulfate as sulfur donor; NFS1 probably acting as a sulfur donor for thiocarboxylation reactions. The chain is Adenylyltransferase and sulfurtransferase MOCS3-1 from Zea mays (Maize).